Reading from the N-terminus, the 144-residue chain is Peroxisome assembly protein 22 (144 aa).

A helical membrane pass occupies residues 13-35 (YGAVSLASLLVAASIVAYRWWNA).

This sequence belongs to the peroxin-22 family.

It is found in the peroxisome membrane. In terms of biological role, involved in peroxisome biogenesis. The chain is Peroxisome assembly protein 22 (PEX22) from Eremothecium gossypii (strain ATCC 10895 / CBS 109.51 / FGSC 9923 / NRRL Y-1056) (Yeast).